The sequence spans 316 residues: Ribosomal RNA small subunit methyltransferase H (316 aa).

Residues 35–37 (GGH), D55, F79, D101, and Q108 each bind S-adenosyl-L-methionine. Residues 291-316 (ALKPSDQEVELNPRSRSSVLRVAEKL) are disordered.

It belongs to the methyltransferase superfamily. RsmH family.

It localises to the cytoplasm. It carries out the reaction cytidine(1402) in 16S rRNA + S-adenosyl-L-methionine = N(4)-methylcytidine(1402) in 16S rRNA + S-adenosyl-L-homocysteine + H(+). Functionally, specifically methylates the N4 position of cytidine in position 1402 (C1402) of 16S rRNA. The protein is Ribosomal RNA small subunit methyltransferase H of Vibrio cholerae serotype O1 (strain ATCC 39315 / El Tor Inaba N16961).